A 190-amino-acid polypeptide reads, in one-letter code: CASP-like protein 1E2 (190 aa).

Positions 1 to 21 are disordered; the sequence is MEHEGKNNMNGMEMEKGKREL. Over 1–28 the chain is Cytoplasmic; sequence MEHEGKNNMNGMEMEKGKRELGSRKGVE. A helical transmembrane segment spans residues 29–49; sequence LTMRVLALILTMAAATVLGVA. Over 50-83 the chain is Extracellular; sequence KQTKVVSIKLIPTLPPLDITTTAKASYLSAFVYN. The chain crosses the membrane as a helical span at residues 84-104; the sequence is ISVNAIACGYTAISIAILMIS. The Cytoplasmic portion of the chain corresponds to 105-111; that stretch reads RGRRSKK. Residues 112-132 traverse the membrane as a helical segment; the sequence is LLMVVLLGDLVMVALLFSGTG. At 133 to 163 the chain is on the extracellular side; sequence AASAIGLMGLHGNKHVMWKKVCGVFGKFCHR. A helical transmembrane segment spans residues 164–184; sequence AAPSLPLTLLAAVVFMFLVVL. Over 185–190 the chain is Cytoplasmic; it reads DAIKLP.

The protein belongs to the Casparian strip membrane proteins (CASP) family. As to quaternary structure, homodimer and heterodimers.

Its subcellular location is the cell membrane. In Arabidopsis thaliana (Mouse-ear cress), this protein is CASP-like protein 1E2.